The following is a 265-amino-acid chain: 5'-nucleotidase SurE (265 aa).

Positions 8, 9, 39, and 96 each coordinate a divalent metal cation.

Belongs to the SurE nucleotidase family. The cofactor is a divalent metal cation.

The protein localises to the cytoplasm. The enzyme catalyses a ribonucleoside 5'-phosphate + H2O = a ribonucleoside + phosphate. Its function is as follows. Nucleotidase that shows phosphatase activity on nucleoside 5'-monophosphates. The polypeptide is 5'-nucleotidase SurE (Dehalococcoides mccartyi (strain ATCC BAA-2266 / KCTC 15142 / 195) (Dehalococcoides ethenogenes (strain 195))).